The following is a 798-amino-acid chain: Probable DEAD-box ATP-dependent RNA helicase 48 (798 aa).

Disordered stretches follow at residues 76–100 (KMWG…MSPK), 117–148 (DFWN…NSPI), and 236–257 (FRKN…GKMI). Over residues 132 to 148 (GSRSGSDSIDSTSNSPI) the composition is skewed to low complexity. Residues 242-252 (STEEDSDEEGD) are compositionally biased toward acidic residues. The Q motif signature appears at 328-356 (KRFDESCISPLTLKALSASGILKMTRVQD). Residues 359-543 (LSECLDGKDA…QLVLKRDHSY (185 aa)) form the Helicase ATP-binding domain. ATP is bound at residue 372-379 (AKTGTGKS). The DEAD box signature appears at 491-494 (DEAD). One can recognise a Helicase C-terminal domain in the interval 577–726 (LLKEHINNTP…SIVKHQVDQS (150 aa)).

The protein belongs to the DEAD box helicase family.

The catalysed reaction is ATP + H2O = ADP + phosphate + H(+). The sequence is that of Probable DEAD-box ATP-dependent RNA helicase 48 (RH48) from Arabidopsis thaliana (Mouse-ear cress).